We begin with the raw amino-acid sequence, 601 residues long: RNA polymerase II C-terminal domain phosphatase-like 5 (601 aa).

Residues 1–20 (MFVAKNLSPERESKRQKKEP) are disordered. Residues 8–20 (SPERESKRQKKEP) show a composition bias toward basic and acidic residues. FCP1 homology domains are found at residues 84-259 (LNMK…TDES) and 381-553 (LNEK…DESE).

In terms of tissue distribution, expressed in roots, seedlings, hypocotyls, cotyledons, leaves, siliques and flowers.

The protein resides in the nucleus. The catalysed reaction is O-phospho-L-seryl-[protein] + H2O = L-seryl-[protein] + phosphate. It catalyses the reaction O-phospho-L-threonyl-[protein] + H2O = L-threonyl-[protein] + phosphate. Functionally, mediates the dephosphorylation of 'Ser-2' of the heptad repeats YSPTSPS in the C-terminal domain of the largest RNA polymerase II subunit (RPB1). This promotes the activity of RNA polymerase II. Positively regulates abscisic acid (ABA) and drought responses, including the regulation of specific genes expression. The polypeptide is RNA polymerase II C-terminal domain phosphatase-like 5 (Arabidopsis thaliana (Mouse-ear cress)).